The following is a 492-amino-acid chain: Catalase isozyme C (492 aa).

Arg62 is a heme binding site. Residue His65 is part of the active site. Arg102 contacts heme. The active site involves Asn138. Residue Phe151 coordinates heme. Position 210 is a phosphotyrosine; by STRK1 (Tyr210). Residues 325-348 (CPGIIVPGIYYSDDKLLQTRIFSY) constitute a cross-link (3-(S-cysteinyl)-tyrosine (Cys-Tyr)). Heme contacts are provided by Arg344, Tyr348, and Arg355. Positions 484–492 (SRLSAKPSM) match the Peroxisome targeting signal motif.

Belongs to the catalase family. In terms of assembly, homotetramer. Interacts with GLO1 and GLO4; these interactions are disturbed by alpha-hydroxy-2-pyridinemethanesulfonic acid (HPMS) and salicylic acid (SA). Interacts with STRK1 at the plasma membrane. Heme serves as cofactor. Post-translationally, activated by STRK1-mediated phosphorylation at Tyr-210 upon salt and oxidative stress. Highly expressed in mature leaves. Mainly expressed in leaf blades, stems, panicles, leaf sheaths, and culms, but barely in roots.

It is found in the peroxisome. Its subcellular location is the glyoxysome. The protein resides in the cell membrane. It catalyses the reaction 2 H2O2 = O2 + 2 H2O. Its activity is regulated as follows. Strongly inhibited by beta-mercaptoethanol, sodium azide and potassium cyanide. Slightly repressed by 3-amino-1,2,4-triazole (3-AT). Activity is repressed proportionally to increased concentration of NaCl, KCl, LiCl and MgCl(2). Its function is as follows. Occurs in almost all aerobically respiring organisms and serves to protect cells from the toxic effects of hydrogen peroxide. Responsible for the redox homeostasis in leaves. Prevents nitric oxide (NO) accumulation and subsequent NO-mediated leaf cell death as well as the S-nitrosylation of specific proteins (e.g. glyceraldehyde 3-phosphate dehydrogenase and thioredoxin) by degrading H(2)O(2). Involved in photorespiration. Promotes drought stress tolerance and recovery. Involved in NO-mediated enhanced tolerance to zinc oxide nanoparticles (ZnO NPs)-induced phytotoxicity. Participates in melatonin-mediated detoxification. The chain is Catalase isozyme C from Oryza sativa subsp. japonica (Rice).